A 173-amino-acid polypeptide reads, in one-letter code: Photosystem I assembly protein Ycf3 (173 aa).

TPR repeat units lie at residues 35-68 (AYVYYRDGLSAQNDGDYAEALENYEESLKLEENA), 72-105 (GETLKNIAIIYMSNGEEERALETYQKALDENPKQ), and 120-153 (GRTAEEEGRRDDADGWFDQAANVWTQAVRLNPGG).

This sequence belongs to the Ycf3 family.

The protein localises to the cellular thylakoid membrane. Essential for the assembly of the photosystem I (PSI) complex. May act as a chaperone-like factor to guide the assembly of the PSI subunits. In Synechococcus sp. (strain CC9311), this protein is Photosystem I assembly protein Ycf3.